Here is a 505-residue protein sequence, read N- to C-terminus: MATIRADEISNIIRERIEQYNREVKIVNTGTVLQVGDGIARIYGLDEVMAGELVEFEEGTIGIALNLESKNVGVVLMGDGLMIQEGSSVKATGRIAQIPVSEAYLGRVINALAKPIDGRGEISSSESRLIESPAPGIISRRSVYEPLQTGLIAIDAMIPIGRGQRELIIGDRQTGKTAVATDTILNQQGNNVICVYVAIGQKASSVAQVVNALQERGAMEYTIVVAEAADSPATLQYLAPYTGAALAEYFMYRERHTLIIYDDPSKQAQAYRQMSLLLRRPPGREAYPGDVFYLHSRLLERAAKLSSRLGEGSMTALPIVETQSGDVSAYIPTNVISITDGQIFLSADLFNAGIRPAINVGISVSRVGSAAQIKAMKQVAGKLKLELAQFAELEAFAQFSSDLDKATQNQLARGQRLRELLKQSQAKPLTVAEQILTIYTGTNGYLDSFEIAQVRKFLDELRDYVKTRKPQFEEIISSTKIFTEEAQALLKDAIQEQKELFLVQE.

170–177 (GDRQTGKT) contacts ATP.

It belongs to the ATPase alpha/beta chains family. As to quaternary structure, F-type ATPases have 2 components, CF(1) - the catalytic core - and CF(0) - the membrane proton channel. CF(1) has five subunits: alpha(3), beta(3), gamma(1), delta(1), epsilon(1). CF(0) has four main subunits: a, b, b' and c.

The protein localises to the plastid. The protein resides in the chloroplast thylakoid membrane. It carries out the reaction ATP + H2O + 4 H(+)(in) = ADP + phosphate + 5 H(+)(out). Its function is as follows. Produces ATP from ADP in the presence of a proton gradient across the membrane. The alpha chain is a regulatory subunit. This Oenothera parviflora (Small-flowered evening primrose) protein is ATP synthase subunit alpha, chloroplastic.